Consider the following 79-residue polypeptide: uncharacterized protein (79 aa).

This is an uncharacterized protein from Sulfolobus spindle-shape virus 1 (SSV1).